A 750-amino-acid polypeptide reads, in one-letter code: Photosystem I P700 chlorophyll a apoprotein A1 (750 aa).

A run of 8 helical transmembrane segments spans residues 70–93 (VFSA…FHGA), 156–179 (LYCT…FHYH), 195–219 (LNHH…HVSL), 291–309 (IAHH…GHMY), 346–369 (WHAQ…HHMY), 385–411 (LSLF…IFMV), 433–455 (AIIS…LYIH), and 531–549 (FLVH…LILL). Residues cysteine 573 and cysteine 582 each contribute to the [4Fe-4S] cluster site. Transmembrane regions (helical) follow at residues 589-610 (HVFL…HFSW) and 664-686 (LSAY…MFLF). Histidine 675 contacts chlorophyll a'. Chlorophyll a is bound by residues methionine 683 and tyrosine 691. Tryptophan 692 is a phylloquinone binding site. Residues 724-744 (AVGVTHYLLGGIATTWAFFLA) traverse the membrane as a helical segment.

Belongs to the PsaA/PsaB family. In terms of assembly, the PsaA/B heterodimer binds the P700 chlorophyll special pair and subsequent electron acceptors. PSI consists of a core antenna complex that captures photons, and an electron transfer chain that converts photonic excitation into a charge separation. The eukaryotic PSI reaction center is composed of at least 11 subunits. The cofactor is P700 is a chlorophyll a/chlorophyll a' dimer, A0 is one or more chlorophyll a, A1 is one or both phylloquinones and FX is a shared 4Fe-4S iron-sulfur center..

The protein resides in the plastid. It is found in the chloroplast thylakoid membrane. It carries out the reaction reduced [plastocyanin] + hnu + oxidized [2Fe-2S]-[ferredoxin] = oxidized [plastocyanin] + reduced [2Fe-2S]-[ferredoxin]. PsaA and PsaB bind P700, the primary electron donor of photosystem I (PSI), as well as the electron acceptors A0, A1 and FX. PSI is a plastocyanin-ferredoxin oxidoreductase, converting photonic excitation into a charge separation, which transfers an electron from the donor P700 chlorophyll pair to the spectroscopically characterized acceptors A0, A1, FX, FA and FB in turn. Oxidized P700 is reduced on the lumenal side of the thylakoid membrane by plastocyanin. This is Photosystem I P700 chlorophyll a apoprotein A1 from Oryza nivara (Indian wild rice).